The following is a 324-amino-acid chain: NADH-ubiquinone oxidoreductase chain 1 (324 aa).

The next 8 helical transmembrane spans lie at I5–F25, F75–L95, L106–G126, I146–F166, T177–A197, L228–F248, Q259–I279, and F299–S319.

The protein belongs to the complex I subunit 1 family.

The protein resides in the mitochondrion inner membrane. It catalyses the reaction a ubiquinone + NADH + 5 H(+)(in) = a ubiquinol + NAD(+) + 4 H(+)(out). In terms of biological role, core subunit of the mitochondrial membrane respiratory chain NADH dehydrogenase (Complex I) that is believed to belong to the minimal assembly required for catalysis. Complex I functions in the transfer of electrons from NADH to the respiratory chain. The immediate electron acceptor for the enzyme is believed to be ubiquinone. In Squalus acanthias (Spiny dogfish), this protein is NADH-ubiquinone oxidoreductase chain 1 (MT-ND1).